Reading from the N-terminus, the 132-residue chain is Holo-[acyl-carrier-protein] synthase (132 aa).

2 residues coordinate Mg(2+): aspartate 8 and glutamate 62.

Belongs to the P-Pant transferase superfamily. AcpS family. Requires Mg(2+) as cofactor.

The protein localises to the cytoplasm. It carries out the reaction apo-[ACP] + CoA = holo-[ACP] + adenosine 3',5'-bisphosphate + H(+). In terms of biological role, transfers the 4'-phosphopantetheine moiety from coenzyme A to a Ser of acyl-carrier-protein. The protein is Holo-[acyl-carrier-protein] synthase of Leptothrix cholodnii (strain ATCC 51168 / LMG 8142 / SP-6) (Leptothrix discophora (strain SP-6)).